Reading from the N-terminus, the 568-residue chain is Autophagy-related protein 18 (568 aa).

The stretch at 19–57 (KPSSSVNFITFNQDGSCIAVGNNKGYSIFTTNPFTKCYD) is one WD 1 repeat. The segment covering 162-171 (STDTSNSADN) has biased composition (polar residues). The interval 162–210 (STDTSNSADNSGSIGSGPASGSGAGSGSASMTSTDSTPDAQSHSYLAYP) is disordered. Residues 175 to 187 (IGSGPASGSGAGS) are compositionally biased toward gly residues. Residues 188-198 (GSASMTSTDST) are compositionally biased toward low complexity. WD repeat units follow at residues 268–308 (AHKS…KLYQ) and 313–352 (TYPT…SLES). Positions 309-313 (FRRGT) match the L/FRRG motif motif. Positions 350–429 (LESKHKRKRA…ISGMSEDGKE (80 aa)) are disordered. Acidic residues predominate over residues 375–394 (DLDDEIEDDGDDSDVDDVES). The segment covering 405 to 421 (LSQGSSNSYTSMNSGIS) has biased composition (polar residues). 2 WD repeats span residues 464-508 (DFLP…DMVP) and 518-558 (APAS…GGDC).

It belongs to the WD repeat PROPPIN family. As to quaternary structure, component of the PI(3,5)P2 regulatory complex.

It localises to the preautophagosomal structure membrane. It is found in the vacuole membrane. The protein resides in the endosome membrane. In terms of biological role, the PI(3,5)P2 regulatory complex regulates both the synthesis and turnover of phosphatidylinositol 3,5-bisphosphate (PtdIns(3,5)P2). Necessary for proper vacuole morphology. Plays an important role in osmotically-induced vacuole fragmentation. Required for cytoplasm to vacuole transport (Cvt) vesicle formation, pexophagy and starvation-induced autophagy. Involved in correct ATG9 trafficking to the pre-autophagosomal structure. Might also be involved in premeiotic DNA replication. This chain is Autophagy-related protein 18 (ATG18), found in Meyerozyma guilliermondii (strain ATCC 6260 / CBS 566 / DSM 6381 / JCM 1539 / NBRC 10279 / NRRL Y-324) (Yeast).